Here is a 92-residue protein sequence, read N- to C-terminus: Small ribosomal subunit protein uS19 (92 aa).

It belongs to the universal ribosomal protein uS19 family.

Functionally, protein S19 forms a complex with S13 that binds strongly to the 16S ribosomal RNA. This is Small ribosomal subunit protein uS19 from Bifidobacterium longum subsp. infantis (strain ATCC 15697 / DSM 20088 / JCM 1222 / NCTC 11817 / S12).